The primary structure comprises 208 residues: Small ribosomal subunit protein uS4 (208 aa).

An S4 RNA-binding domain is found at Thr97–Leu160.

Belongs to the universal ribosomal protein uS4 family. As to quaternary structure, part of the 30S ribosomal subunit. Contacts protein S5. The interaction surface between S4 and S5 is involved in control of translational fidelity.

Functionally, one of the primary rRNA binding proteins, it binds directly to 16S rRNA where it nucleates assembly of the body of the 30S subunit. Its function is as follows. With S5 and S12 plays an important role in translational accuracy. The sequence is that of Small ribosomal subunit protein uS4 from Xanthomonas oryzae pv. oryzae (strain MAFF 311018).